The chain runs to 265 residues: Pre-protein VI (265 aa).

Residues 1–33 (MEDINFSSLAPRHGTRPYMGTWNEIGTSQLNGG) constitute a propeptide that is removed on maturation. The amphipathic alpha-helix essential for membrane lytic activity stretch occupies residues 34–54 (AFNWNSIWSGLKNFGSTIKTY). An involved in endosomal membrane lysis region spans residues 36-53 (NWNSIWSGLKNFGSTIKT). An interaction with hexon protein region spans residues 48–74 (GSTIKTYGTKAWNSQTGQMLRDKLKDQ). The Nuclear export signal signature appears at 67–76 (LRDKLKDQNF). Residues 123 to 155 (LETVPGSVPTKGEKRPRPDAEETLVTHTTEPPS) are disordered. Residues 133–142 (KGEKRPRPDA) are compositionally biased toward basic and acidic residues. Positions 136–140 (KRPRP) match the Nuclear localization signal motif. T148 carries the phosphothreonine; by host modification. The PPXY motif motif lies at 153–156 (PPSY). The short motif at 246-257 (STLNSIVGLGVK) is the Nuclear export signal element. Residues 248 to 254 (LNSIVGL) form an interaction with hexon protein region. Residues 255–265 (GVKSLKRRRCY) form a binds to importin alpha/beta, involved in hexon nuclear import region. A Nuclear localization signal motif is present at residues 260–263 (KRRR).

It belongs to the adenoviridae protein VI family. In terms of assembly, interacts with hexon protein; this interaction allows nuclear import of hexon trimers and possibly pre-capsid assembly. Interacts (via C-terminal NLS) with importin alpha/beta. Interacts (via PPxY motif) with host NEDD4 ubiquitine ligase; this interaction might play a role in virus intracellular transport during entry. Part of a complex composed of the core-capsid bridging protein, the endosome lysis protein VI and the hexon-linking protein VIII; these interactions bridge the virus core to the capsid. Interacts with peripentonal hexons; this interaction stabilizes the capsid by gluing two peripentonal hexons together and joining them with an adjacent group-of-nine hexon. As to quaternary structure, heterodimer with the viral protease; disulfide-linked. Interacts with the viral protease. In terms of processing, ubiquitinated by Nedd4 following partial capsid disassembly; which might play a role in intracellular virus movement during entry. Contains the major nuclear import and export signals. Proteolytically removed during virion maturation. The processing of the C-terminus turns the precursor into a mature viral structural protein and abrogates its ability to promote hexon import and act as a potential chaperone protein.

The protein localises to the host nucleus. The protein resides in the host cytoplasm. It is found in the virion. Functionally, during virus assembly, promotes hexon trimers nuclear import through nuclear pore complexes via an importin alpha/beta-dependent mechanism. By analogy to herpesviruses capsid assembly, might act as a chaperone to promote the formation of the icosahedral capsid. Its function is as follows. Structural component of the virion that provides increased stability to the particle shell through its interaction with the core-capsid bridging protein and the hexon-linking protein VIII. Fibers shedding during virus entry into host cell allows the endosome lysis protein to be exposed as a membrane-lytic peptide. Exhibits pH-independent membrane fragmentation activity and probably mediates viral rapid escape from host endosome via organellar membrane lysis. It is not clear if it then remains partially associated with the capsid and involved in the intracellular microtubule-dependent transport of capsid to the nucleus, or if it is lost during endosomal penetration. Cofactor that activates the viral protease. Binds to viral protease in a 1:1 ratio. This Human adenovirus A serotype 12 (HAdV-12) protein is Pre-protein VI.